The sequence spans 115 residues: T cell receptor beta variable 7-6 (115 aa).

An N-terminal signal peptide occupies residues 1–21 (MGTSLLCWVVLGFLGTDHTGA). An Ig-like domain is found at 22-115 (GVSQSPRYKV…SAMYRCASSL (94 aa)). Residues C42 and C111 are joined by a disulfide bond.

As to quaternary structure, alpha-beta TR is a heterodimer composed of an alpha and beta chain; disulfide-linked. The alpha-beta TR is associated with the transmembrane signaling CD3 coreceptor proteins to form the TR-CD3 (TcR or TCR). The assembly of alpha-beta TR heterodimers with CD3 occurs in the endoplasmic reticulum where a single alpha-beta TR heterodimer associates with one CD3D-CD3E heterodimer, one CD3G-CD3E heterodimer and one CD247 homodimer forming a stable octameric structure. CD3D-CD3E and CD3G-CD3E heterodimers preferentially associate with TR alpha and TR beta chains, respectively. The association of the CD247 homodimer is the last step of TcR assembly in the endoplasmic reticulum and is required for transport to the cell surface.

The protein localises to the cell membrane. Its function is as follows. V region of the variable domain of T cell receptor (TR) beta chain that participates in the antigen recognition. Alpha-beta T cell receptors are antigen specific receptors which are essential to the immune response and are present on the cell surface of T lymphocytes. Recognize peptide-major histocompatibility (MH) (pMH) complexes that are displayed by antigen presenting cells (APC), a prerequisite for efficient T cell adaptive immunity against pathogens. Binding of alpha-beta TR to pMH complex initiates TR-CD3 clustering on the cell surface and intracellular activation of LCK that phosphorylates the ITAM motifs of CD3G, CD3D, CD3E and CD247 enabling the recruitment of ZAP70. In turn ZAP70 phosphorylates LAT, which recruits numerous signaling molecules to form the LAT signalosome. The LAT signalosome propagates signal branching to three major signaling pathways, the calcium, the mitogen-activated protein kinase (MAPK) kinase and the nuclear factor NF-kappa-B (NF-kB) pathways, leading to the mobilization of transcription factors that are critical for gene expression and essential for T cell growth and differentiation. The T cell repertoire is generated in the thymus, by V-(D)-J rearrangement. This repertoire is then shaped by intrathymic selection events to generate a peripheral T cell pool of self-MH restricted, non-autoaggressive T cells. Post-thymic interaction of alpha-beta TR with the pMH complexes shapes TR structural and functional avidity. This Homo sapiens (Human) protein is T cell receptor beta variable 7-6.